Reading from the N-terminus, the 258-residue chain is UPF0246 protein mma_1385 (258 aa).

It belongs to the UPF0246 family.

The sequence is that of UPF0246 protein mma_1385 from Janthinobacterium sp. (strain Marseille) (Minibacterium massiliensis).